The chain runs to 237 residues: MDTLKDQFVVPGDVIGKIGDLKVRIGPGLLQTKDTVLATKAGVLRYSKFHRFYWIENEQKRYVPQVEDMVIGTIIEKHAESFKVDIGSSCSALLSAYSFEGATKSNKPLLNVGNLIYCRVTVANRDMEPEVVCLSQKQKAEGFGQLIGGYMLNCSLGLSHYLLSEDCFLLQILGKHIPYEIAVGVNGRVWINSGSNHNTIVVSNTIYNSQYIQDDQIEPFILKSLSINETSGLVEQN.

An S1 motif domain is found at 67–137 (EDMVIGTIIE…EPEVVCLSQK (71 aa)).

It belongs to the RRP40 family. In terms of assembly, component of the RNA exosome complex.

Its subcellular location is the cytoplasm. The protein resides in the nucleus. It is found in the nucleolus. In terms of biological role, non-catalytic component of the RNA exosome complex which has 3'-&gt;5' exoribonuclease activity and participates in a multitude of cellular RNA processing and degradation events. This Dictyostelium discoideum (Social amoeba) protein is Putative exosome complex component rrp40 (exosc3).